Reading from the N-terminus, the 152-residue chain is 2-C-methyl-D-erythritol 2,4-cyclodiphosphate synthase (152 aa).

Asp8 and His10 together coordinate a divalent metal cation. 4-CDP-2-C-methyl-D-erythritol 2-phosphate is bound by residues 8–10 (DSH) and 34–35 (HS). His42 contacts a divalent metal cation. 4-CDP-2-C-methyl-D-erythritol 2-phosphate-binding positions include 56–58 (DIG) and 61–65 (FPDTD).

The protein belongs to the IspF family. In terms of assembly, homotrimer. Requires a divalent metal cation as cofactor.

It catalyses the reaction 4-CDP-2-C-methyl-D-erythritol 2-phosphate = 2-C-methyl-D-erythritol 2,4-cyclic diphosphate + CMP. It participates in isoprenoid biosynthesis; isopentenyl diphosphate biosynthesis via DXP pathway; isopentenyl diphosphate from 1-deoxy-D-xylulose 5-phosphate: step 4/6. Functionally, involved in the biosynthesis of isopentenyl diphosphate (IPP) and dimethylallyl diphosphate (DMAPP), two major building blocks of isoprenoid compounds. Catalyzes the conversion of 4-diphosphocytidyl-2-C-methyl-D-erythritol 2-phosphate (CDP-ME2P) to 2-C-methyl-D-erythritol 2,4-cyclodiphosphate (ME-CPP) with a corresponding release of cytidine 5-monophosphate (CMP). The protein is 2-C-methyl-D-erythritol 2,4-cyclodiphosphate synthase of Thermus thermophilus (strain ATCC BAA-163 / DSM 7039 / HB27).